The primary structure comprises 259 residues: Dihydroorotate dehydrogenase B (NAD(+)), electron transfer subunit (259 aa).

One can recognise an FAD-binding FR-type domain in the interval 2–102 (MQKQNMIVVN…LGPLGHGFPV (101 aa)). Residues 53–56 (RPIS), 70–72 (LYR), and 77–78 (GT) each bind FAD. 4 residues coordinate [2Fe-2S] cluster: Cys-221, Cys-226, Cys-229, and Cys-246.

It belongs to the PyrK family. As to quaternary structure, heterotetramer of 2 PyrK and 2 PyrD type B subunits. It depends on [2Fe-2S] cluster as a cofactor. Requires FAD as cofactor.

Its pathway is pyrimidine metabolism; UMP biosynthesis via de novo pathway; orotate from (S)-dihydroorotate (NAD(+) route): step 1/1. Functionally, responsible for channeling the electrons from the oxidation of dihydroorotate from the FMN redox center in the PyrD type B subunit to the ultimate electron acceptor NAD(+). The polypeptide is Dihydroorotate dehydrogenase B (NAD(+)), electron transfer subunit (Bacillus cereus (strain 03BB102)).